A 636-amino-acid polypeptide reads, in one-letter code: MNEINVTLPDGSQRPLPAGASIFDLAASIGAGLAKAAIAGKIDGNLVDLNTPLADGARVEIITEKSPEALEIIRHSTSHLMAQAVKALFPQAKVTIGPAIETGFYYDFDVDHPFTPEDLEKIEEKMRELAKADLKIERKELTSADAIALFKGMGENYKVELIEDLGADKVSLYSQGDFVDLCRGPHLPKTSFIKAFKLTSIAGAYWRGDEKRPMLQRVYGTAFGDKKELEAYLARIEEAKKRDHRKLGRELDLFSFNDEVGAGLVIWHPKGAMLRTILEDFERKEHLKRGYDIVLGPQILKTELWQRSGHYENYRENMYFTTVDEQSYGVKPMNCLAHMMIYRSQLRSYRDLPLRYFELGTVHRHERAGVLHGLLRVRGFTQDDAHILCTPEQLDAEIKGVIQFVTEVMGIFGFEFEMELSTRPEKSIGSDDAWELATNALLNALKDSGRPYEINEGDGAFYGPKIDIKLRDALDRRWQCATIQCDFTLPERFDLTYVDADGEKKRPVMVHRVILGAIERFIGVLIEHFAGNFPTWLAPVQATIVTVTDNQIPYAQAAFDKLRAAGIRVQKDFRNEKLGFKIREAQLQKIPYMLVVGDKEVESGMLAPRFRDGKNLESMTPEQFVSFIESEVKSYK.

Residues 1–63 form the TGS domain; sequence MNEINVTLPD…ADGARVEIIT (63 aa). The segment at 243–534 is catalytic; it reads DHRKLGRELD…LIEHFAGNFP (292 aa). The Zn(2+) site is built by cysteine 335, histidine 386, and histidine 511.

Belongs to the class-II aminoacyl-tRNA synthetase family. As to quaternary structure, homodimer. It depends on Zn(2+) as a cofactor.

The protein localises to the cytoplasm. The enzyme catalyses tRNA(Thr) + L-threonine + ATP = L-threonyl-tRNA(Thr) + AMP + diphosphate + H(+). In terms of biological role, catalyzes the attachment of threonine to tRNA(Thr) in a two-step reaction: L-threonine is first activated by ATP to form Thr-AMP and then transferred to the acceptor end of tRNA(Thr). Also edits incorrectly charged L-seryl-tRNA(Thr). The polypeptide is Threonine--tRNA ligase (Citrifermentans bemidjiense (strain ATCC BAA-1014 / DSM 16622 / JCM 12645 / Bem) (Geobacter bemidjiensis)).